Here is a 268-residue protein sequence, read N- to C-terminus: MLSDIIRAVILGVVEGVTEFLPVSSTGHLLLVGRFFNLGEGDFWKTFDVLIQLGAILAILALYFAKLWRIALGMFSDPAAQRFIIGVLVAFLPAAVIGAAAGSYIKLFLFNPWVVCFSLIVGGAVLLWVDQLDLKPRHHDATTFPVLMYFYIGCAQCVAMIPGVSRSGASIVAAMLFGADKRAAAEFSFFLAIPTMVGAFVYDLYKSRADLTTDHMTIVAVGFVVSFITAIIVVKTFLGYVTRHGFQLFAWWRVVVGTLGLIALAMGR.

8 consecutive transmembrane segments (helical) span residues 9–29, 47–67, 83–103, 107–127, 144–164, 184–204, 218–238, and 246–266; these read VILG…TGHL, FDVL…FAKL, FIIG…AAGS, LFLF…AVLL, FPVL…IPGV, AAEF…VYDL, IVAV…KTFL, and FQLF…ALAM.

Belongs to the UppP family.

It is found in the cell inner membrane. It catalyses the reaction di-trans,octa-cis-undecaprenyl diphosphate + H2O = di-trans,octa-cis-undecaprenyl phosphate + phosphate + H(+). Its function is as follows. Catalyzes the dephosphorylation of undecaprenyl diphosphate (UPP). Confers resistance to bacitracin. This Rhodopseudomonas palustris (strain HaA2) protein is Undecaprenyl-diphosphatase.